Here is a 973-residue protein sequence, read N- to C-terminus: Short transient receptor potential channel 5 (973 aa).

Over 1–325 (MAQLYYKKVN…YDGFPGWRRK (325 aa)) the chain is Cytoplasmic. ANK repeat units follow at residues 30–60 (SAEE…IYYN), 69–97 (LGRS…VYVG), 98–124 (DALL…PSGE), and 141–170 (PDIT…TIPR). 4 residues coordinate Zn(2+): histidine 172, cysteine 176, cysteine 178, and cysteine 181. An intramembrane region (discontinuously helical) is located at residues 326-360 (HWVVKLLTCMTIGFLFPMLSIAYLISPRSNLGLFI). Residues 361–363 (KKP) lie on the Cytoplasmic side of the membrane. The helical transmembrane segment at 364 to 384 (FIKFICHTASYLTFLFMLLLA) threads the bilayer. Topologically, residues 385–404 (SQHIVRTDLHVQGPPPTVVE) are extracellular. Residues 405–419 (WMILPWVLGFIWGEI) traverse the membrane as a helical segment. 4 residues coordinate Ca(2+): glutamate 418, glutamate 421, asparagine 436, and aspartate 439. Over 420–433 (KEMWDGGFTEYIHD) the chain is Cytoplasmic. The helical transmembrane segment at 434–454 (WWNLMDFAMNSLYLATISLKI) threads the bilayer. The Extracellular portion of the chain corresponds to 455–476 (VAYVKYNGSRPREEWEMWHPTL). Asparagine 461 carries N-linked (GlcNAc...) asparagine glycosylation. The helical transmembrane segment at 477–497 (IAEALFAISNILSSLRLISLF) threads the bilayer. The Cytoplasmic portion of the chain corresponds to 498–512 (TANSHLGPLQISLGR). The chain crosses the membrane as a helical span at residues 513–535 (MLLDILKFLFIYCLVLLAFANGL). Residues 536-603 (NQLYFYYETR…HEFTEFVGAT (68 aa)) are Extracellular-facing. Cysteine 553 and cysteine 558 are joined by a disulfide. Residues 604-624 (MFGTYNVISLVVLLNMLIAMM) traverse the membrane as a helical segment. Residues 625 to 973 (NNSYQLIADH…GQEEQVTTRL (349 aa)) lie on the Cytoplasmic side of the membrane. Disordered regions lie at residues 766–794 (HPRS…RAKS) and 810–837 (GPPL…KRSF). Residues 971 to 973 (TRL) are essential for binding to NHERF1 PDZ domain.

This sequence belongs to the transient receptor (TC 1.A.4) family. STrpC subfamily. TRPC5 sub-subfamily. Homotetramer. Heterotetramer with TRPC1 and/or TRPC4. Each subunit in the homomeric ion channel (via ANK repeats) interacts with one copy of GTP-bound GNAI3; the interaction is direct and activates the ion channel. Interacts with TRPC4AP. Interacts with NHERF1. Interacts with MX1 and RNF24. Interacts (via C-terminus) with CABP1. Interacts with SESTD1 (via the spectrin 1 repeat). Interacts with PLSCR1. Interacts with PKD2L2. In terms of tissue distribution, expressed in brain with higher levels in fetal brain. Found in cerebellum and occipital pole.

The protein localises to the cell membrane. It carries out the reaction Ca(2+)(in) = Ca(2+)(out). Its activity is regulated as follows. Activated by G-protein coupled receptors via direct interaction with GTP-bound GNAI3, which increases the channel sensitivity to phosphatidylinositol bisphosphate. May be activated by intracellular calcium store depletion. Calcium channel activity is enhanced by MYLK, that promotes its subcellular localization at the plasma membrane. Functionally, forms a receptor-activated non-selective calcium permeant cation channel. Mediates calcium-dependent phosphatidylserine externalization and apoptosis in neurons via its association with PLSCR1. Acts on distinct neuronal populations in the hypothalamus to regulate innate behaviors including feeding, anxiety (flight/fight/fear), socialization, and maternal care. This chain is Short transient receptor potential channel 5 (TRPC5), found in Homo sapiens (Human).